The following is a 139-amino-acid chain: Large ribosomal subunit protein uL16 (139 aa).

Over residues 1–20 (MLIPRRVKHRKQHHPKRRGQ) the composition is skewed to basic residues. The disordered stretch occupies residues 1 to 25 (MLIPRRVKHRKQHHPKRRGQAKGGT).

This sequence belongs to the universal ribosomal protein uL16 family. Part of the 50S ribosomal subunit.

Functionally, binds 23S rRNA and is also seen to make contacts with the A and possibly P site tRNAs. This is Large ribosomal subunit protein uL16 from Streptomyces avermitilis (strain ATCC 31267 / DSM 46492 / JCM 5070 / NBRC 14893 / NCIMB 12804 / NRRL 8165 / MA-4680).